A 114-amino-acid chain; its full sequence is Small ribosomal subunit protein uS17 (114 aa).

Belongs to the universal ribosomal protein uS17 family. As to quaternary structure, part of the 30S ribosomal subunit.

In terms of biological role, one of the primary rRNA binding proteins, it binds specifically to the 5'-end of 16S ribosomal RNA. This Sulfolobus acidocaldarius (strain ATCC 33909 / DSM 639 / JCM 8929 / NBRC 15157 / NCIMB 11770) protein is Small ribosomal subunit protein uS17.